Reading from the N-terminus, the 115-residue chain is Large ribosomal subunit protein uL22 (115 aa).

Belongs to the universal ribosomal protein uL22 family. Part of the 50S ribosomal subunit.

Its function is as follows. This protein binds specifically to 23S rRNA; its binding is stimulated by other ribosomal proteins, e.g. L4, L17, and L20. It is important during the early stages of 50S assembly. It makes multiple contacts with different domains of the 23S rRNA in the assembled 50S subunit and ribosome. The globular domain of the protein is located near the polypeptide exit tunnel on the outside of the subunit, while an extended beta-hairpin is found that lines the wall of the exit tunnel in the center of the 70S ribosome. The sequence is that of Large ribosomal subunit protein uL22 from Coxiella burnetii (strain CbuK_Q154) (Coxiella burnetii (strain Q154)).